Reading from the N-terminus, the 368-residue chain is Homoserine dehydrogenase (368 aa).

Residues valine 12, glycine 14, and valine 15 each contribute to the NAD(+) site. Position 15 (valine 15) interacts with NADP(+). NADPH is bound by residues valine 15, lysine 59, threonine 95, serine 96, and lysine 119. Threonine 95 provides a ligand contact to NAD(+). Residue threonine 95 coordinates NADP(+). Lysine 119 contributes to the NADP(+) binding site. The Na(+) site is built by glutamate 146, valine 149, alanine 151, and leucine 153. NADP(+)-binding residues include glycine 209 and glutamate 212. Positions 212 and 223 each coordinate L-homoserine. The active-site Proton donor is lysine 227. Residue glycine 349 coordinates NAD(+). Residue glycine 349 participates in NADP(+) binding. NADPH is bound at residue glycine 349.

This sequence belongs to the homoserine dehydrogenase family. It depends on a metal cation as a cofactor.

It catalyses the reaction L-homoserine + NADP(+) = L-aspartate 4-semialdehyde + NADPH + H(+). The catalysed reaction is L-homoserine + NAD(+) = L-aspartate 4-semialdehyde + NADH + H(+). It participates in amino-acid biosynthesis; L-methionine biosynthesis via de novo pathway; L-homoserine from L-aspartate: step 3/3. It functions in the pathway amino-acid biosynthesis; L-threonine biosynthesis; L-threonine from L-aspartate: step 3/5. In terms of biological role, catalyzes the conversion of L-aspartate-beta-semialdehyde (L-Asa) to L-homoserine (L-Hse), the third step in the biosynthesis of amino acids that derive from aspartate (the aspartate family of amino acids), including methioinine and threonine, the latter of which is a precursor to isoleucine; production of homoserine leads to a branch-point in the pathway as it can either be O-phosphorylated for processing to threonine, or O-acylated for processing to methionine. This is Homoserine dehydrogenase from Emericella nidulans (strain FGSC A4 / ATCC 38163 / CBS 112.46 / NRRL 194 / M139) (Aspergillus nidulans).